A 343-amino-acid chain; its full sequence is uncharacterized protein (343 aa).

Disordered regions lie at residues M1–T25, K62–D119, and N169–S188. Positions K62–Q71 are enriched in basic residues. Residues N72–E81 show a composition bias toward basic and acidic residues. The segment covering N83–N107 has biased composition (acidic residues).

This is an uncharacterized protein from Acanthamoeba polyphaga (Amoeba).